Consider the following 539-residue polypeptide: F-box only protein 31 (539 aa).

The interval G11 to G53 is disordered. Phosphoserine is present on S33. At S33 the chain carries Phosphoserine; by PKB/AKT1. Over residues S33–R43 the composition is skewed to acidic residues. T37 carries the phosphothreonine modification. The D box motif lies at R64 to E69. Residues R64–R110 form the F-box domain. Residues C206, H214, C230, and H236 each contribute to the Zn(2+) site. At S278 the chain carries Phosphoserine; by ATM. Residues D297 to L299 carry the DDL motif motif. Residues V377–P397 are compositionally biased toward basic and acidic residues. The tract at residues V377–F446 is disordered. T419 carries the post-translational modification Phosphothreonine; by MTOR. S480 is modified (phosphoserine).

It belongs to the FBXO31 family. In terms of assembly, part of a SCF (SKP1-cullin-F-box) protein ligase complex SCF(FBXO31) composed of CUL1, SKP1, RBX1 and FBXO31. Interacts (when phosphorylated at Ser-33) with CDC20, promoting ubiquitination by the APC/C complex. Phosphorylation at Ser-278 by ATM following gamma-irradiation results in its stabilization. Phosphorylation at Thr-419 and Ser-480 in absence of stress promotes its ubiquitination and degradation by the SCF(FBXO46) complex. Phosphorylation at Ser-33 by AKT1 promotes association with CDC20 and ubiquitination by the APC/C complex. In terms of processing, ubiquitinated by the SCF(FBXO46) complex in absence of stress, promoting its degradation. Ubiquitinated by the APC/C complex following phosphorylation at Ser-33, leading to its degradation by the proteasome. In terms of tissue distribution, highly expressed in brain. Expressed at moderate levels in most tissues, except bone marrow.

It localises to the cytoplasm. The protein resides in the cytoskeleton. Its subcellular location is the microtubule organizing center. It is found in the centrosome. It functions in the pathway protein modification; protein ubiquitination. In terms of biological role, substrate-recognition component of the SCF(FBXO31) protein ligase complex, which specifically mediates the ubiquitination of proteins amidated at their C-terminus in response to oxidative stress, leading to their degradation by the proteasome. FBXO31 specifically recognizes and binds C-terminal peptides bearing an amide: C-terminal amidation in response to oxidative stress takes place following protein fragmentation. The SCF(FBXO31) also plays a role in G1 arrest following DNA damage by mediating ubiquitination of phosphorylated cyclin-D1 (CCND1), promoting its degradation by the proteasome, resulting in G1 arrest. The SCF(FBXO31) complex is however not a major regulator of CCND1 stability during the G1/S transition. In response to genotoxic stress, the SCF(FBXO31) complex directs ubiquitination and degradation of phosphorylated MDM2, thereby promoting p53/TP53-mediated DNA damage response. SCF(FBXO31) complex is required for genomic integrity by catalyzing ubiquitination and degradation of cyclin-A (CCNA1 and/or CCNA2) during the G1 phase. In response to genotoxic stress, the SCF(FBXO31) complex directs ubiquitination and degradation of phosphorylated FBXO46 and MAP2K6. SCF(FBXO31) complex promotes ubiquitination and degradation of CDT1 during the G2 phase to prevent re-replication. The SCF(FBXO31) complex also mediates ubiquitination and degradation of DUSP6, OGT and PARD6A. The sequence is that of F-box only protein 31 from Homo sapiens (Human).